Reading from the N-terminus, the 242-residue chain is Caffeoyl-CoA O-methyltransferase 2 (242 aa).

Lys16 contributes to the substrate binding site. S-adenosyl-L-methionine contacts are provided by residues Thr58, Glu80, 82 to 83 (GV), Ser88, Asp106, and Ala135. Substrate is bound at residue Asp158. Asp158 serves as a coordination point for a divalent metal cation. S-adenosyl-L-methionine is bound at residue Asp160. The a divalent metal cation site is built by Asp184 and Asn185. Asn189 is a binding site for substrate.

The protein belongs to the class I-like SAM-binding methyltransferase superfamily. Cation-dependent O-methyltransferase family. CCoAMT subfamily. Mg(2+) is required as a cofactor. In terms of tissue distribution, mostly expressed in the bottom and middle parts of the stems.

The catalysed reaction is (E)-caffeoyl-CoA + S-adenosyl-L-methionine = (E)-feruloyl-CoA + S-adenosyl-L-homocysteine + H(+). It participates in aromatic compound metabolism; phenylpropanoid biosynthesis. In terms of biological role, methylates caffeoyl-CoA to feruloyl-CoA and 5-hydroxyferuloyl-CoA to sinapoyl-CoA. Plays a role in the synthesis of feruloylated polysaccharides. Involved in the reinforcement of the plant cell wall. Also involved in the responding to wounding or pathogen challenge by the increased formation of cell wall-bound ferulic acid polymers. Methylates 5-hydroxyferulolyl-CoA more efficiently than caffeoyl-CoA. In Nicotiana tabacum (Common tobacco), this protein is Caffeoyl-CoA O-methyltransferase 2 (CCOAOMT2).